A 757-amino-acid polypeptide reads, in one-letter code: 5-methyltetrahydropteroyltriglutamate--homocysteine methyltransferase (757 aa).

5-methyltetrahydropteroyltri-L-glutamate contacts are provided by residues 17–20 and Lys117; that span reads RELK. Residues 434–436 and Glu487 each bind L-homocysteine; that span reads IGS. Residues 434–436 and Glu487 each bind L-methionine; that span reads IGS. 5-methyltetrahydropteroyltri-L-glutamate contacts are provided by residues 518-519 and Trp564; that span reads RC. Asp602 is a binding site for L-homocysteine. Asp602 lines the L-methionine pocket. Glu608 contributes to the 5-methyltetrahydropteroyltri-L-glutamate binding site. Zn(2+) contacts are provided by His644, Cys646, and Glu668. His697 serves as the catalytic Proton donor. Cys729 is a Zn(2+) binding site.

The protein belongs to the vitamin-B12 independent methionine synthase family. The cofactor is Zn(2+).

It carries out the reaction 5-methyltetrahydropteroyltri-L-glutamate + L-homocysteine = tetrahydropteroyltri-L-glutamate + L-methionine. Its pathway is amino-acid biosynthesis; L-methionine biosynthesis via de novo pathway; L-methionine from L-homocysteine (MetE route): step 1/1. Its function is as follows. Catalyzes the transfer of a methyl group from 5-methyltetrahydrofolate to homocysteine resulting in methionine formation. The protein is 5-methyltetrahydropteroyltriglutamate--homocysteine methyltransferase of Proteus mirabilis (strain HI4320).